The following is a 269-amino-acid chain: Ribonuclease HII (269 aa).

An RNase H type-2 domain is found at 83–269 (YLIAGVDEVG…HRMSFLTNIL (187 aa)). D89, E90, and D185 together coordinate a divalent metal cation.

This sequence belongs to the RNase HII family. Mn(2+) serves as cofactor. Requires Mg(2+) as cofactor.

The protein resides in the cytoplasm. It carries out the reaction Endonucleolytic cleavage to 5'-phosphomonoester.. Endonuclease that specifically degrades the RNA of RNA-DNA hybrids. The polypeptide is Ribonuclease HII (Clostridium botulinum (strain ATCC 19397 / Type A)).